The sequence spans 464 residues: Properdin (464 aa).

Positions Met-1 to Gly-22 are cleaved as a signal peptide. TSP type-1 domains are found at residues Asp-24–Arg-72, Ser-73–Pro-130, Met-132–Pro-187, His-189–Pro-251, Ala-253–Pro-309, Asn-311–Ile-372, and Lys-374–Lys-457. 3 disulfides stabilise this stretch: Cys-28–Cys-52, Cys-39–Cys-68, and Cys-53–Cys-71. C-linked (Man) tryptophan glycosylation is found at Trp-79 and Trp-82. Intrachain disulfides connect Cys-85–Cys-123, Cys-89–Cys-129, Cys-100–Cys-107, Cys-128–Cys-166, Cys-144–Cys-180, Cys-148–Cys-186, and Cys-159–Cys-170. C-linked (Man) tryptophan glycosylation is found at Trp-135, Trp-138, and Trp-141. O-linked (Fuc...) threonine glycosylation occurs at Thr-147. Trp-192, Trp-195, and Trp-198 each carry a C-linked (Man) tryptophan glycan. Cystine bridges form between Cys-201/Cys-244, Cys-205/Cys-250, and Cys-220/Cys-234. The O-linked (Fuc...) serine glycan is linked to Ser-204. Trp-256 and Trp-259 each carry a C-linked (Man) tryptophan glycan. Intrachain disulfides connect Cys-265–Cys-302, Cys-269–Cys-308, and Cys-280–Cys-292. Thr-268 carries an O-linked (Fuc...) threonine glycan. C-linked (Man) tryptophan glycosylation is found at Trp-317 and Trp-320. 3 disulfide bridges follow: Cys-323-Cys-365, Cys-332-Cys-371, and Cys-345-Cys-355. Positions Gly-346–Pro-354 are interaction with Complement C3 beta chain. Residues Trp-377, Trp-380, and Trp-383 are each glycosylated (C-linked (Man) tryptophan). Disulfide bonds link Cys-386–Cys-450, Cys-390–Cys-456, and Cys-402–Cys-434. N-linked (GlcNAc...) asparagine glycosylation occurs at Asn-423.

In plasma, properdin exists as dimers, trimers or tetramers in the relative proportions of 26:54:20. Interacts with the pro-C3-convertase enzyme complex (C3b-Bb) comprised of Complement C3 beta chain (C3b) and the Complement factor B Bb fragment (Bb), where it binds (via its TSP type-1 5 domain) with C3b and Bb. This interaction stabilizes the complex and allows it to become the active C3-convertase enzyme complex (C3b-Bb-FP). Interacts with C3b. Interacts with CFB.

It localises to the secreted. Its function is as follows. A positive regulator of the alternate pathway of complement. It binds to and stabilizes the C3- and C5-convertase enzyme complexes. Inhibits CFI-CFH mediated degradation of Inhibits CFI-CFH mediated degradation of Complement C3 beta chain (C3b). The chain is Properdin (Cfp) from Mus musculus (Mouse).